A 3135-amino-acid chain; its full sequence is Beauvericin nonribosomal cyclodepsipeptide synthetase BEA1 (3135 aa).

The interval 70-458 (HVAYEISNDI…QRLRGSPDKL (389 aa)) is condensation 1. Residues 196-228 (LSNRPYTPESSDPEDDGLSLTPTDGSKTPETEG) form a disordered region. Residues 499–896 (SLSPSKVAIC…GRMDSQVKIR (398 aa)) form an adenylation 1 region. One can recognise a Carrier 1 domain in the interval 1021–1097 (STTTSSQSKL…GLEAIVNGSA (77 aa)). O-(pantetheine 4'-phosphoryl)serine is present on Ser1058. The tract at residues 1115-1542 (SYSQGRLWFL…NIPISVLPLT (428 aa)) is condensation 2. Positions 1571–1974 (FRTQVAAYPD…GRMDTQFKIR (404 aa)) are adenylation 2. Residues 2042–2182 (MYADIGDIDP…FPSPEYLAQV (141 aa)) form an S-adenosyl-L-methionine-dependent N-methyltransferase region. Carrier domains lie at 2509 to 2583 (VPIS…REGL) and 2603 to 2677 (APRT…ESTD). Residues Ser2543 and Ser2637 each carry the O-(pantetheine 4'-phosphoryl)serine modification. A condensation 3 region spans residues 2721 to 3127 (QDMYQSTQMQ…QYFLEEVCNT (407 aa)).

The protein belongs to the NRP synthetase family.

It carries out the reaction 3 (R)-2-hydroxy-3-methylbutanoate + 3 L-phenylalanine + 3 S-adenosyl-L-methionine + 6 ATP = beauvericin + 6 AMP + 3 S-adenosyl-L-homocysteine + 6 diphosphate + 6 H(+). Beauvericin nonribosomal cyclodepsipeptide synthetase; part of the gene cluster that mediates the biosynthesis of beauvericin (BEA), a non-ribosomal cyclic hexadepsipeptide that shows antibiotic, antifungal, insecticidal, and cancer cell antiproliferative and antihaptotactic activity. Ketoisovalerate reductase BEA2 catalyzes the NADPH-specific reduction of ketoisovaleric acid to hydroxyisovalerate, a precursor for beauvericin biosynthesis. The nonribosomal cyclodepsipeptide synthetase BEA1 then catalyzes the formation of beauvericin via condensation and cyclization of 3 dipeptidol monomers, each composed of one unit of hydroxyisovalerate and one unit of N-methyl-phenylalanine. This is Beauvericin nonribosomal cyclodepsipeptide synthetase BEA1 from Gibberella fujikuroi (strain CBS 195.34 / IMI 58289 / NRRL A-6831) (Bakanae and foot rot disease fungus).